A 298-amino-acid polypeptide reads, in one-letter code: GTPase Era (298 aa).

In terms of domain architecture, Era-type G spans 8-176 (HCGSVAVIGR…VRDVLKLLPE (169 aa)). The G1 stretch occupies residues 16–23 (GRPNVGKS). 16–23 (GRPNVGKS) is a GTP binding site. A G2 region spans residues 42–46 (QTTRH). Residues 63–66 (DTPG) are G3. Residues 63-67 (DTPGL) and 125-128 (NKID) contribute to the GTP site. Residues 125-128 (NKID) are G4. The tract at residues 155 to 157 (ISA) is G5. Positions 199-283 (VREQLMRQLG…FLETWVRVRE (85 aa)) constitute a KH type-2 domain.

This sequence belongs to the TRAFAC class TrmE-Era-EngA-EngB-Septin-like GTPase superfamily. Era GTPase family. Monomer.

It is found in the cytoplasm. Its subcellular location is the cell inner membrane. An essential GTPase that binds both GDP and GTP, with rapid nucleotide exchange. Plays a role in 16S rRNA processing and 30S ribosomal subunit biogenesis and possibly also in cell cycle regulation and energy metabolism. The polypeptide is GTPase Era (Stenotrophomonas maltophilia (strain K279a)).